Consider the following 977-residue polypeptide: MSEDGAQTAEKMDTHTQYYLESLIIDALKGKGFQKIIELFDGKVIFSSQFHNKLLLSQLDKLINKELDRNEFKHVSVLMKCIQHFCKNDCQESSTLIHQGLVSKMVLWFERTVDFLRISKEATLLTLVEDFYDSALVICKCNCEDGKRQLLDSFLIRLGHLVTEKWVACHLRLEALRTINCILDSISREDKKKLHCSEDLCELTKDLARTIQEAGDYDIQVAISEALCRMMGKKFRDSFVHQWFEDNFLADAFKEIKDKEFETDCRKFLNCLNSRHQSNKGVYTFPCITVFTDLDELKKPQDENMENFWIDFNAGSQCVSFYIHNTEGSLWDSVRLLKESVNNYTLKENDGQQMLGIYLKDPQVINTNDVTKVKIYFEPKHDIKSAIKRVFEDINEIHSNPVELDSTEGLIDIGNSLASHTVITTATTFKQWKRNQANKMDSASDILGSQTSEHSSTTKTSSANRSVQKSLSNADSHEIVIESVPLEAVITIADEQPNTAQFQDDMDDAIFQGAASDVPAKDSSQEIIIITEASADKEFAAKKTQGIFQFQGYSDTLASDQVSDAKKKILLPKQSTERATPASRYRASMNSPLQRTSSAYRSHLFCESNEVTSNTESERSWIQDFKNKSAVKSADYSCEKTRNKSKRKVLPLASESGDDEKQVDTTETVARFTSRKEMHRPEDINPKSPHSAELKLPGISALLTPGDSRSQSKSDYRYQSAIDDQDIMDPVEEASSPEMSIDHNKEPKNGHDEVYASGPLNRSVDGNNIYHAADTLQHATGKRKHKTCEREEIPFKPRKLFSSTEKNVNRSAADSEDSEDVFYSESHDQDLAEASVLSAFDSFTKELKRKFLTRYKRIENRANHVLKSSHQQVSTVLNEIHQCRLQKINHFNKIVVHELSSLEAEVQALKQFEKETLDFWEDQYVKMNTFCSSQTQRIKTMDSALLETISNLKNVIQKTTKEEVSNTEEHIQNKLLK.

Disordered regions lie at residues 447 to 474, 574 to 593, 642 to 728, and 804 to 824; these read LGSQ…LSNA, QSTE…NSPL, RNKS…QDIM, and TEKN…VFYS. Over residues 449-462 the composition is skewed to low complexity; sequence SQTSEHSSTTKTSS. Residues 463-474 show a composition bias toward polar residues; that stretch reads ANRSVQKSLSNA. Basic and acidic residues predominate over residues 674–693; the sequence is SRKEMHRPEDINPKSPHSAE.

This sequence belongs to the SYCP2 family. Post-translationally, ubiquitinated and gradually degraded by the proteasome during oocyte maturation. Phosphorylated in maturing oocytes, before its degradation. As to expression, expressed in immature oocytes (at protein level). Expressed in the ovary.

Its subcellular location is the nucleus. It is found in the chromosome. The protein localises to the centromere. It localises to the nucleolus. Functionally, oocyte-specific protein that localizes to centromeres at the dictyate stage and regulates the survival of primordial oocytes. This chain is Synaptonemal complex protein 2-like (sycp2l), found in Xenopus laevis (African clawed frog).